The chain runs to 1298 residues: DNA-directed RNA polymerase subunit beta' (1298 aa).

Residues Cys-60, Cys-62, Cys-75, and Cys-78 each coordinate Zn(2+). Asp-535, Asp-537, and Asp-539 together coordinate Mg(2+). Zn(2+) contacts are provided by Cys-877, Cys-954, Cys-961, and Cys-964.

This sequence belongs to the RNA polymerase beta' chain family. In terms of assembly, the RNAP catalytic core consists of 2 alpha, 1 beta, 1 beta' and 1 omega subunit. When a sigma factor is associated with the core the holoenzyme is formed, which can initiate transcription. Requires Mg(2+) as cofactor. The cofactor is Zn(2+).

It carries out the reaction RNA(n) + a ribonucleoside 5'-triphosphate = RNA(n+1) + diphosphate. DNA-dependent RNA polymerase catalyzes the transcription of DNA into RNA using the four ribonucleoside triphosphates as substrates. This Micrococcus luteus (strain ATCC 4698 / DSM 20030 / JCM 1464 / CCM 169 / CCUG 5858 / IAM 1056 / NBRC 3333 / NCIMB 9278 / NCTC 2665 / VKM Ac-2230) (Micrococcus lysodeikticus) protein is DNA-directed RNA polymerase subunit beta'.